We begin with the raw amino-acid sequence, 1134 residues long: Ubinuclein-1 (1134 aa).

2 disordered regions span residues 1 to 38 (MSEPHRVQFTSLPGSLNPAFLKKSRKEEAGAGEQHQDC) and 78 to 98 (LQPGDKKKDLSDPFNDEEKER). Positions 1–166 (MSEPHRVQFT…YGGFYINSGT (166 aa)) are sufficient for interaction with HIRA. Composition is skewed to basic and acidic residues over residues 25–38 (RKEEAGAGEQHQDC) and 81–98 (GDKKKDLSDPFNDEEKER). Residue threonine 166 is modified to Phosphothreonine. The tract at residues 171-220 (QASESEDDFIKEKKKKSPKKRKLKEGGEKIKKKKKDDTYDKEKKSKKSKF) is disordered. Phosphoserine is present on residues serine 173 and serine 175. The span at 182–193 (EKKKKSPKKRKL) shows a compositional bias: basic residues. A compositionally biased stretch (basic and acidic residues) spans 194–213 (KEGGEKIKKKKKDDTYDKEK). The residue at position 222 (lysine 222) is an N6-acetyllysine. Positions 253 to 268 (QKEKEAQKKREEEHKP) are enriched in basic and acidic residues. 4 disordered regions span residues 253-282 (QKEKEAQKKREEEHKPVAVPSAEAQGLREL), 321-358 (SESPEGSPFRDMDDGSDSLGVGLDQEFRQPSSLPEGLP), 480-504 (EEEKDKEQRDRICSDEEEDEEKGGR), and 594-660 (PSKI…LEDS). Phosphoserine is present on residues serine 323, serine 336, serine 338, and serine 493. The stretch at 479–542 (LEEEKDKEQR…SQDLERNNKA (64 aa)) forms a coiled coil. Composition is skewed to basic and acidic residues over residues 480–493 (EEEKDKEQRDRICS) and 598–610 (KVKESSTKPDKKV). A phosphoserine mark is found at serine 660 and serine 677. 2 disordered regions span residues 712–836 (TEEK…SPTQ) and 852–986 (QGFH…GVAK). Low complexity-rich tracts occupy residues 792-804 (GPQVAVPVPGPQV) and 856-891 (PSAPATSGGLSASSSSSHKTPASSSSALSHPAKPHS). The span at 892–905 (VSSAGSSYKNNPFA) shows a compositional bias: polar residues. Positions 906-932 (SSISKHGVSSGSSSSGGTPVQSSVSGS) are enriched in low complexity. The segment covering 941 to 950 (SVGQATSRPV) has biased composition (polar residues). Positions 973–982 (PNGDSSGGTQ) are enriched in gly residues. Serine 1025 bears the Phosphoserine mark. Residues 1093–1108 (GLHSSPPHAAPLPHAA) show a composition bias toward low complexity. A disordered region spans residues 1093 to 1134 (GLHSSPPHAAPLPHAAVPTHIPQSLPGASQLHGKGPAVPRKL).

The protein belongs to the ubinuclein family. As to quaternary structure, component of a complex that includes at least ASF1A, CABIN1, HIRA, histone H3.3 and UBN1. Interacts with HIRA (via WD repeat domain); the interaction is direct. Interacts with ASF1A, CEBPA, TJP1, TJP2 and TJP3. In terms of assembly, (Microbial infection) Interacts with Epstein-Barr virus BZLF1. In terms of tissue distribution, ubiquitous. Also expressed in numerous tumors and cancer cell lines.

The protein localises to the nucleus. Its subcellular location is the nucleoplasm. It is found in the PML body. It localises to the cell junction. The protein resides in the tight junction. Acts as a novel regulator of senescence. Involved in the formation of senescence-associated heterochromatin foci (SAHF), which represses expression of proliferation-promoting genes. Binds to proliferation-promoting genes. May be required for replication-independent chromatin assembly. This Homo sapiens (Human) protein is Ubinuclein-1 (UBN1).